Reading from the N-terminus, the 269-residue chain is UPF0494 membrane protein C1348.01 (269 aa).

4 helical membrane passes run 107 to 127 (WPLL…KFEV), 144 to 164 (IWVP…SLIF), 177 to 197 (GVII…IAAL), and 201 to 221 (ITGL…LSLG).

This sequence belongs to the UPF0494 family.

It is found in the vacuole membrane. This chain is UPF0494 membrane protein C1348.01, found in Schizosaccharomyces pombe (strain 972 / ATCC 24843) (Fission yeast).